A 309-amino-acid polypeptide reads, in one-letter code: Olfactory receptor 1L8 (309 aa).

The Extracellular portion of the chain corresponds to 1 to 26 (MERINHTSSVSEFILLGLSSRPEDQK). Asn5 carries N-linked (GlcNAc...) asparagine glycosylation. A helical membrane pass occupies residues 27-50 (TLFVLFLIVYLVTITGNLLIILAI). Over 51 to 58 (RFNPHLQT) the chain is Cytoplasmic. A helical transmembrane segment spans residues 59-80 (PMYFFLSFLSLTDICFTTSVVP). At 81–101 (KMLMNFLSEKKTISYAGCLTQ) the chain is on the extracellular side. The cysteines at positions 98 and 190 are disulfide-linked. A helical transmembrane segment spans residues 102–121 (MYFLYALGNSDSCLLAVMAF). Over 122-140 (DRYVAVCDPFHYVTTMSHH) the chain is Cytoplasmic. The chain crosses the membrane as a helical span at residues 141 to 159 (HCVLLVAFSCSFPHLHSLL). Topologically, residues 160 to 197 (HTLLLNRLTFCDSNVIHHFLCDLSPVLKLSCSSIFVNE) are extracellular. The helical transmembrane segment at 198–220 (IVQMTEAPIVLVTRFLCIAFSYI) threads the bilayer. Residues 221–237 (RILTTVLKIPSTSGKRK) are Cytoplasmic-facing. The helical transmembrane segment at 238–260 (AFSTCGFYLTVVTLFYGSIFCVY) threads the bilayer. Over 261-272 (LQPPSTYAVKDH) the chain is Extracellular. A helical membrane pass occupies residues 273–292 (VATIVYTVLSSMLNPFIYSL). Residues 293–309 (RNKDLKQGLRKLMSKRS) are Cytoplasmic-facing.

The protein belongs to the G-protein coupled receptor 1 family.

Its subcellular location is the cell membrane. Odorant receptor. This is Olfactory receptor 1L8 (OR1L8) from Homo sapiens (Human).